A 434-amino-acid chain; its full sequence is Gamma-enolase (434 aa).

Residue S2 is modified to N-acetylserine. K5 is modified (N6-acetyllysine). T26 is modified (phosphothreonine). S40 is a Mg(2+) binding site. At Y44 the chain carries Phosphotyrosine. An N6-acetyllysine; alternate modification is found at K60. The residue at position 60 (K60) is an N6-succinyllysine; alternate. K64 carries the N6-acetyllysine modification. Residue K89 is modified to N6-acetyllysine; alternate. K89 carries the post-translational modification N6-succinyllysine; alternate. Positions 158 and 167 each coordinate substrate. An N6-acetyllysine mark is found at K193, K197, and K199. K202 carries the post-translational modification N6-acetyllysine; alternate. K202 is covalently cross-linked (Glycyl lysine isopeptide (Lys-Gly) (interchain with G-Cter in SUMO2); alternate). E210 functions as the Proton donor in the catalytic mechanism. K228 and K233 each carry N6-acetyllysine; alternate. The residue at position 228 (K228) is an N6-succinyllysine; alternate. The residue at position 233 (K233) is an N6-(2-hydroxyisobutyryl)lysine; alternate. D245 contributes to the Mg(2+) binding site. K256 bears the N6-acetyllysine mark. At S263 the chain carries Phosphoserine. Position 287 is a phosphotyrosine (Y287). S291 carries the phosphoserine modification. E293 and D318 together coordinate Mg(2+). E293 and D318 together coordinate substrate. K335 and K343 each carry N6-acetyllysine. K343 (proton acceptor) is an active-site residue. Residues 370 to 373 (SHRS) and K394 contribute to the substrate site. The residue at position 406 (K406) is an N6-acetyllysine.

The protein belongs to the enolase family. Mammalian enolase is composed of 3 isozyme subunits, alpha, beta and gamma, which can form homodimers or heterodimers which are cell-type and development-specific. The cofactor is Mg(2+). As to expression, the alpha/alpha homodimer is expressed in embryo and in most adult tissues. The alpha/beta heterodimer and the beta/beta homodimer are found in striated muscle, and the alpha/gamma heterodimer and the gamma/gamma homodimer in neurons.

It localises to the cytoplasm. The protein localises to the cell membrane. The catalysed reaction is (2R)-2-phosphoglycerate = phosphoenolpyruvate + H2O. It participates in carbohydrate degradation; glycolysis; pyruvate from D-glyceraldehyde 3-phosphate: step 4/5. Functionally, has neurotrophic and neuroprotective properties on a broad spectrum of central nervous system (CNS) neurons. Binds, in a calcium-dependent manner, to cultured neocortical neurons and promotes cell survival. The sequence is that of Gamma-enolase (ENO2) from Homo sapiens (Human).